Here is a 135-residue protein sequence, read N- to C-terminus: Thyrostimulin beta-5 subunit (135 aa).

The signal sequence occupies residues 1 to 19; it reads MVMPLVLSLALTPPPLCHA. Cystine bridges form between C30–C87, C54–C102, C63–C118, C67–C120, and C123–C130.

It belongs to the glycoprotein hormones subunit beta family. As to quaternary structure, heterodimer with GPHA2; non-covalently-linked. As to expression, expressed by the venom duct.

It is found in the secreted. This Conus victoriae (Queen Victoria cone) protein is Thyrostimulin beta-5 subunit.